A 66-amino-acid chain; its full sequence is Scarabaecin (66 aa).

A signal peptide spans 1–26 (MKTLTFYTLLLCAALYSNFFDCKAVA). The cysteines at positions 46 and 57 are disulfide-linked.

The protein resides in the secreted. In terms of biological role, possesses antifungal activity against phytopathogenic fungi such as P.oryzae, R.solani and B.cinerea but not against phytopathogenic bacteria. Shows weak activity against the insect pathogenic fungus B.bassiana and against S.aureus. Binds chitin. In Oryctes rhinoceros (Coconut rhinoceros beetle), this protein is Scarabaecin.